The chain runs to 395 residues: Elongation factor Tu (395 aa).

Residues 10-204 (KPHVNIGTIG…AVDSYIPTPQ (195 aa)) form the tr-type G domain. The tract at residues 19–26 (GHVDHGKT) is G1. Position 19–26 (19–26 (GHVDHGKT)) interacts with GTP. T26 is a Mg(2+) binding site. A G2 region spans residues 60–64 (GITIN). The segment at 81–84 (DCPG) is G3. Residues 81–85 (DCPGH) and 136–139 (NKCD) contribute to the GTP site. Positions 136 to 139 (NKCD) are G4. The segment at 174–176 (SAL) is G5.

Belongs to the TRAFAC class translation factor GTPase superfamily. Classic translation factor GTPase family. EF-Tu/EF-1A subfamily. As to quaternary structure, monomer.

It localises to the cytoplasm. The enzyme catalyses GTP + H2O = GDP + phosphate + H(+). Functionally, GTP hydrolase that promotes the GTP-dependent binding of aminoacyl-tRNA to the A-site of ribosomes during protein biosynthesis. The sequence is that of Elongation factor Tu from Symbiobacterium thermophilum (strain DSM 24528 / JCM 14929 / IAM 14863 / T).